The sequence spans 297 residues: Calponin-1 (297 aa).

The 104-residue stretch at 28-131 (HQREQELREW…STLLALASMA (104 aa)) folds into the Calponin-homology (CH) domain. 3 Calponin-like repeats span residues 164–189 (IGLQ…RHLY), 204–229 (ISLQ…RQIF), and 243–268 (VSLQ…RQVY). Thr-170 is subject to Phosphothreonine; by ROCK2. A Phosphoserine; by ROCK2 modification is found at Ser-175. Thr-180 and Thr-184 each carry phosphothreonine; by ROCK2. Thr-259 bears the Phosphothreonine; by ROCK2 mark.

Belongs to the calponin family. In terms of assembly, part of cGMP kinase signaling complex at least composed of ACTA2/alpha-actin, CNN1/calponin H1, PLN/phospholamban, PRKG1 and ITPR1. As to expression, smooth muscle, and tissues containing significant amounts of smooth muscle.

Functionally, thin filament-associated protein that is implicated in the regulation and modulation of smooth muscle contraction. It is capable of binding to actin, calmodulin and tropomyosin. The interaction of calponin with actin inhibits the actomyosin Mg-ATPase activity. The protein is Calponin-1 (Cnn1) of Mus musculus (Mouse).